Consider the following 350-residue polypeptide: Small ribosomal subunit biogenesis GTPase RsgA (350 aa).

A compositionally biased stretch (polar residues) spans methionine 1 to asparagine 17. The interval methionine 1–aspartate 33 is disordered. The region spanning threonine 104–phenylalanine 273 is the CP-type G domain. Residues asparagine 160 to aspartate 163 and glycine 214 to serine 222 contribute to the GTP site. Cysteine 297, cysteine 302, histidine 304, and cysteine 310 together coordinate Zn(2+).

It belongs to the TRAFAC class YlqF/YawG GTPase family. RsgA subfamily. Monomer. Associates with 30S ribosomal subunit, binds 16S rRNA. Requires Zn(2+) as cofactor.

The protein resides in the cytoplasm. In terms of biological role, one of several proteins that assist in the late maturation steps of the functional core of the 30S ribosomal subunit. Helps release RbfA from mature subunits. May play a role in the assembly of ribosomal proteins into the subunit. Circularly permuted GTPase that catalyzes slow GTP hydrolysis, GTPase activity is stimulated by the 30S ribosomal subunit. This chain is Small ribosomal subunit biogenesis GTPase RsgA, found in Shigella flexneri.